We begin with the raw amino-acid sequence, 468 residues long: Interferon-induced protein with tetratricopeptide repeats 2 (468 aa).

N-acetylserine is present on Ser2. 9 TPR repeats span residues 51–89, 90–135, 136–171, 172–208, 242–275, 276–328, 329–359, 360–398, and 399–441; these read ATMC…PDHV, EIRN…RIES, PELD…DPKN, PEFT…SPNS, TDVL…LPNN, AYVY…MIKD, SCSY…KELT, PGLK…RQKT, and KPKE…ESQQ. The interval 441–468 is disordered; that stretch reads QAAKVSERGQDSERPVFSPSLHEGGNEQ. Residues 445 to 454 are compositionally biased toward basic and acidic residues; sequence VSERGQDSER.

It belongs to the IFIT family. Domain-swapped homodimer. Component of an interferon-dependent multiprotein complex, at least composed of IFIT1, IFIT2 and IFIT3. Interacts with IFIT1 and IFIT3. Interacts with STING1/MITA and disrupts its interaction with MAVS or TBK1. Interacts with EIF3E and EIF3C.

It is found in the cytoplasm. It localises to the endoplasmic reticulum. Functionally, IFN-induced antiviral protein which inhibits expression of viral messenger RNAs lacking 2'-O-methylation of the 5' cap. The ribose 2'-O-methylation would provide a molecular signature to distinguish between self and non-self mRNAs by the host during viral infection. Viruses evolved several ways to evade this restriction system such as encoding their own 2'-O-methylase for their mRNAs or by stealing host cap containing the 2'-O-methylation (cap snatching mechanism). Binds AU-rich viral RNAs, with or without 5' triphosphorylation, RNA-binding is required for antiviral activity. Can promote apoptosis. The chain is Interferon-induced protein with tetratricopeptide repeats 2 (IFIT2) from Cricetulus griseus (Chinese hamster).